A 277-amino-acid chain; its full sequence is uncharacterized protein (277 aa).

Disordered regions lie at residues 1–103 (PPLR…LEDP) and 254–277 (PSPS…SPPR). Positions 48–65 (RRNDTGKDRGTHRQRAET) are enriched in basic and acidic residues. Polar residues predominate over residues 66–77 (PSRSPVPTTNTV). Basic residues predominate over residues 82–91 (PAVRRQRRTQ).

This is an uncharacterized protein from Homo sapiens (Human).